A 29-amino-acid chain; its full sequence is Varv peptide D (29 aa).

A cross-link (cyclopeptide (Gly-Asn)) is located at residues 1–29 (GLPICGETCVGGSCNTPGCSCSWPVCTRN). 3 disulfide bridges follow: C5–C19, C9–C21, and C14–C26.

In terms of processing, this is a cyclic peptide.

Its function is as follows. Probably participates in a plant defense mechanism. The protein is Varv peptide D of Viola arvensis (European field pansy).